A 562-amino-acid polypeptide reads, in one-letter code: RNA N(6)-adenosine-methyltransferase METTL16 (562 aa).

The segment at 17–20 is RNA-binding; the sequence is PPDF. The S-adenosyl-L-methionine site is built by Arg-82, Gly-110, Ser-114, Glu-133, Thr-164, and Asn-184. Residues 163 to 167 form a K-loop region; the sequence is KTLLM. RNA-binding regions lie at residues 199-211, 250-254, and 277-283; these read SRNPRRPPPSSVN, GKKCS, and QGRTMRW. A VCR 1 region spans residues 289–400; it reads FYDDVTVPSP…QLREVPRAPE (112 aa). Ser-329 carries the post-translational modification Phosphoserine. Residues 402–413 are compositionally biased toward basic and acidic residues; sequence VIQALEEKKPTP. The tract at residues 402–498 is disordered; sequence VIQALEEKKP…DQEASEQFGS (97 aa). A compositionally biased stretch (acidic residues) spans 458–467; it reads ENPEPTEDER. The residue at position 463 (Thr-463) is a Phosphothreonine. Over residues 480 to 496 the composition is skewed to polar residues; the sequence is CQGSSNGAQDQEASEQF. A VCR 2 region spans residues 514 to 562; sequence YLFKCLINVKKEVDDALVEMHWVEGQNRDLMNQLCTYIRNQIFRLVAVN.

Belongs to the methyltransferase superfamily. METTL16/RlmF family. As to quaternary structure, interacts with MEPCE. Interacts with LARP7.

The protein localises to the nucleus. It is found in the cytoplasm. It carries out the reaction adenosine in U6 snRNA + S-adenosyl-L-methionine = N(6)-methyladenosine in U6 snRNA + S-adenosyl-L-homocysteine + H(+). The enzyme catalyses an adenosine in mRNA + S-adenosyl-L-methionine = an N(6)-methyladenosine in mRNA + S-adenosyl-L-homocysteine + H(+). Its activity is regulated as follows. Methyltransferase activity is autoinhibited by the K-loop region that blocks S-adenosyl-L-methionine-binding. Upon activation, K-loop changes conformation, allowing S-adenosyl-L-methionine-binding and subsequent methyltransferase activity. mRNA N6-adenosine-methyltransferase activity is inhibited by zinc. Functionally, RNA N6-methyltransferase that methylates adenosine residues at the N(6) position of a subset of RNAs and is involved in S-adenosyl-L-methionine homeostasis by regulating expression of MAT2A transcripts. Able to N6-methylate a subset of mRNAs and U6 small nuclear RNAs (U6 snRNAs). In contrast to the METTL3-METTL14 heterodimer, only able to methylate a limited number of RNAs: requires both a 5'UACAGAGAA-3' nonamer sequence and a specific RNA structure. Plays a key role in S-adenosyl-L-methionine homeostasis by mediating N6-methylation of MAT2A mRNAs, altering splicing of MAT2A transcripts: in presence of S-adenosyl-L-methionine, binds the 3'-UTR region of MAT2A mRNA and specifically N6-methylates the first hairpin of MAT2A mRNA, preventing recognition of their 3'-splice site by U2AF1/U2AF35, thereby inhibiting splicing and protein production of S-adenosylmethionine synthase. In S-adenosyl-L-methionine-limiting conditions, binds the 3'-UTR region of MAT2A mRNA but stalls due to the lack of a methyl donor, preventing N6-methylation and promoting expression of MAT2A. In addition to mRNAs, also able to mediate N6-methylation of U6 small nuclear RNA (U6 snRNA): specifically N6-methylates adenine in position 43 of U6 snRNAs. Also able to bind various lncRNAs, such as 7SK snRNA (7SK RNA) or 7SL RNA. Specifically binds the 3'-end of the MALAT1 long non-coding RNA. This is RNA N(6)-adenosine-methyltransferase METTL16 from Homo sapiens (Human).